We begin with the raw amino-acid sequence, 356 residues long: 4-hydroxy-3-methylbut-2-en-1-yl diphosphate synthase (flavodoxin) (356 aa).

The [4Fe-4S] cluster site is built by C264, C267, C299, and E306.

Belongs to the IspG family. Requires [4Fe-4S] cluster as cofactor.

The enzyme catalyses (2E)-4-hydroxy-3-methylbut-2-enyl diphosphate + oxidized [flavodoxin] + H2O + 2 H(+) = 2-C-methyl-D-erythritol 2,4-cyclic diphosphate + reduced [flavodoxin]. It functions in the pathway isoprenoid biosynthesis; isopentenyl diphosphate biosynthesis via DXP pathway; isopentenyl diphosphate from 1-deoxy-D-xylulose 5-phosphate: step 5/6. Its function is as follows. Converts 2C-methyl-D-erythritol 2,4-cyclodiphosphate (ME-2,4cPP) into 1-hydroxy-2-methyl-2-(E)-butenyl 4-diphosphate. This Natranaerobius thermophilus (strain ATCC BAA-1301 / DSM 18059 / JW/NM-WN-LF) protein is 4-hydroxy-3-methylbut-2-en-1-yl diphosphate synthase (flavodoxin).